Here is an 862-residue protein sequence, read N- to C-terminus: DNA mismatch repair protein MutS (862 aa).

An ATP-binding site is contributed by 618–625; it reads GPNMGGKS. A disordered region spans residues 799 to 824; it reads QLESRDNQASPAVASAPQQQSLSLSP. Residues 806-824 are compositionally biased toward low complexity; sequence QASPAVASAPQQQSLSLSP.

It belongs to the DNA mismatch repair MutS family.

In terms of biological role, this protein is involved in the repair of mismatches in DNA. It is possible that it carries out the mismatch recognition step. This protein has a weak ATPase activity. In Shewanella denitrificans (strain OS217 / ATCC BAA-1090 / DSM 15013), this protein is DNA mismatch repair protein MutS.